The chain runs to 825 residues: MKDRSSTPPLHVHVDENTPVHVHIKKLPKPSAASSQKSHKRGMKGDTVNVRRSVRVKTKVPWMPPGKSSARHVGCKWENPPHCLEITPPSSEKLVSVMRLSDLSTEDDDSGHCKMNRYDKKIDSLMNAVGCLKSEVKMQKGERQMAKRFLEERKEELEEVAHELAETEHENTVLRHNIERIKEEKDFTMLQKKHLQQEKECLMSKLVEAEMDGAAAAKQVMALKDTIGKLKTEKQMTCTDINTLTRQKELLLQKLSTFEETNRTLRDLLREQHCKEDSERLMEQQGALLKRLAEADSEKARLLLLLQDKDKEVEELLQEIQCEKAQAKTASELSKSMESMRGHLQAQLRCKEAENSRLCMQIKNLERSGNQHKAEVEAIMEQLKELKQKGDRDKETLKKAIRAQKERAEKSEEYAEQLHVQLADKDLYVAEALSTLESWRSRYNQVVKDKGDLELEIIVLNDRVTDLVNQQQSLEEKMREDRDSLVERLHRQTAEYSAFKLENERLKASFAPMEDKLNQAHLEVQQLKASVKNYEGMIDNYKSQVMKTRLEADEVAAQLERCDKENKMLKDEMNKEIEAARRQFQSQLADLQQLPDILKITEAKLAECQDQLQGYERKNIDLTAIISDLRSRIEHQGDKLELAREKHQASQKENKQLSQKVDELERKLEATSTQNVEFLQVIAKREEAIHQAQLRLEEKTRECGSLARQLESAIEDARRQVEQTKEQALSKERAAQSKILDLETQLSRTKTELGQLRRTRDDVDRRYQSRLQDLKDRLEQSESTNRSMQNYVQFLKSSYANVFGDGPYTSSYLTSSPIRSRSPPA.

Val22, Lys37, Ser68, and Ser69 each carry phosphoserine. The interval 27 to 46 is disordered; it reads LPKPSAASSQKSHKRGMKGD. Residue Thr87 is modified to Phosphothreonine. A Phosphoserine; by TSSK4 modification is found at Ser90. 2 positions are modified to phosphoserine: Ser101 and Ser104. Thr105 carries the phosphothreonine modification. Phosphoserine is present on residues Ser110 and Ser124. A Glycyl lysine isopeptide (Lys-Gly) (interchain with G-Cter in SUMO2) cross-link involves residue Lys133. Ser134 bears the Phosphoserine mark. The stretch at 139-212 forms a coiled coil; that stretch reads QKGERQMAKR…MSKLVEAEMD (74 aa). Thr226 carries the post-translational modification Phosphothreonine. Coiled-coil stretches lie at residues 240–418 and 456–793; these read DINT…AEQL and EIIV…NYVQ. Residues Ser256 and Ser627 each carry the phosphoserine modification. Residues 532–696 are interaction with BBOF1; it reads KNYEGMIDNY…EAIHQAQLRL (165 aa).

Belongs to the ODF2 family. In terms of assembly, self-associates. Associates with microtubules and forms a fibrillar structure partially linked to the microtubule network. Interacts through its C-terminus with PLK1. Interacts with ODF1. Interacts with MARK4; the interaction is required for localization of ODF2 to centrioles. Interacts with TSSK4. Interacts with AKNA. Interacts with QRICH2. Interacts with CFAP58. Interacts with BBOF1. Interacts with CCDC38. Interacts with CCDC42. Tyrosine phosphorylated. Phosphorylated on Ser-90 by TSSK4. As to expression, testis-specific. Expressed in the proximal compartment of the elongated spermatid tail; later expression progresses to the distal spermatid tail compartment located in the lumen of the seminiferous epithelium. In spermatids (stages II-III) expression of the tails peaks and remains strong during the remaining steps of spermiogenesis (at protein level). Expression correlates with the onset of spermatogenesis and is first detected at 30 days. Higher expression is seen in testis of 40-day-old and adults that are older than 50 days. No expression is seen in 10- and 20-day-old testes.

The protein localises to the cytoplasm. It localises to the cytoskeleton. Its subcellular location is the microtubule organizing center. The protein resides in the centrosome. It is found in the cell projection. The protein localises to the cilium. It localises to the centriole. Its subcellular location is the spindle pole. The protein resides in the flagellum. Its function is as follows. Seems to be a major component of sperm tail outer dense fibers (ODF). ODFs are filamentous structures located on the outside of the axoneme in the midpiece and principal piece of the mammalian sperm tail and may help to maintain the passive elastic structures and elastic recoil of the sperm tail. May have a modulating influence on sperm motility. Functions as a general scaffold protein that is specifically localized at the distal/subdistal appendages of mother centrioles. Component of the centrosome matrix required for the localization of PLK1 and NIN to the centrosomes. Required for the formation and/or maintenance of normal CETN1 assembly. The sequence is that of Outer dense fiber protein 2 (Odf2) from Rattus norvegicus (Rat).